The primary structure comprises 369 residues: Nuclear pore complex-interacting protein family member A2 (369 aa).

Residues 325–346 form a disordered region; that stretch reads KTPPECLLTPLPPSAPPSADDN.

The protein belongs to the NPIP family.

The polypeptide is Nuclear pore complex-interacting protein family member A2 (NPIPA2) (Homo sapiens (Human)).